The sequence spans 157 residues: Phosphopantetheine adenylyltransferase (157 aa).

A substrate-binding site is contributed by threonine 8. ATP contacts are provided by residues 8-9 and histidine 16; that span reads TF. Lysine 40, threonine 72, and arginine 86 together coordinate substrate. ATP contacts are provided by residues 87–89, glutamate 97, and 122–128; these read GLR and YSFLSSS.

It belongs to the bacterial CoaD family. In terms of assembly, homohexamer. Mg(2+) serves as cofactor.

It is found in the cytoplasm. It carries out the reaction (R)-4'-phosphopantetheine + ATP + H(+) = 3'-dephospho-CoA + diphosphate. It participates in cofactor biosynthesis; coenzyme A biosynthesis; CoA from (R)-pantothenate: step 4/5. Its function is as follows. Reversibly transfers an adenylyl group from ATP to 4'-phosphopantetheine, yielding dephospho-CoA (dPCoA) and pyrophosphate. The chain is Phosphopantetheine adenylyltransferase from Prochlorococcus marinus (strain MIT 9301).